Here is a 407-residue protein sequence, read N- to C-terminus: Peptidase T (407 aa).

Zn(2+) is bound at residue His-82. The active site involves Asp-84. Asp-143 is a Zn(2+) binding site. Glu-177 acts as the Proton acceptor in catalysis. Residues Glu-178, Asp-200, and His-382 each contribute to the Zn(2+) site.

It belongs to the peptidase M20B family. It depends on Zn(2+) as a cofactor.

It is found in the cytoplasm. It catalyses the reaction Release of the N-terminal residue from a tripeptide.. Cleaves the N-terminal amino acid of tripeptides. The protein is Peptidase T of Streptococcus thermophilus (strain CNRZ 1066).